Here is a 184-residue protein sequence, read N- to C-terminus: GMP synthase [glutamine-hydrolyzing] subunit A (184 aa).

The 182-residue stretch at 3-184 (PICVVNNYGQ…YENFDAICTE (182 aa)) folds into the Glutamine amidotransferase type-1 domain. The active-site Nucleophile is the C75. Catalysis depends on residues H162 and E164.

As to quaternary structure, heterodimer composed of a glutamine amidotransferase subunit (A) and a GMP-binding subunit (B).

The catalysed reaction is XMP + L-glutamine + ATP + H2O = GMP + L-glutamate + AMP + diphosphate + 2 H(+). The protein operates within purine metabolism; GMP biosynthesis; GMP from XMP (L-Gln route): step 1/1. Its function is as follows. Catalyzes the synthesis of GMP from XMP. The sequence is that of GMP synthase [glutamine-hydrolyzing] subunit A from Methanoregula boonei (strain DSM 21154 / JCM 14090 / 6A8).